The sequence spans 337 residues: Dihydroorotate dehydrogenase (quinone) (337 aa).

Residues 61–65 (AGLDK) and Thr-85 each bind FMN. Lys-65 contacts substrate. 110-114 (NRMGF) contacts substrate. Positions 138 and 171 each coordinate FMN. Asn-171 is a binding site for substrate. Ser-174 (nucleophile) is an active-site residue. Asn-176 contacts substrate. 2 residues coordinate FMN: Lys-216 and Thr-244. Substrate is bound at residue 245 to 246 (NT). FMN-binding positions include Gly-267, Gly-296, and 317–318 (YS).

The protein belongs to the dihydroorotate dehydrogenase family. Type 2 subfamily. In terms of assembly, monomer. FMN serves as cofactor.

The protein resides in the cell membrane. The enzyme catalyses (S)-dihydroorotate + a quinone = orotate + a quinol. It participates in pyrimidine metabolism; UMP biosynthesis via de novo pathway; orotate from (S)-dihydroorotate (quinone route): step 1/1. Catalyzes the conversion of dihydroorotate to orotate with quinone as electron acceptor. This is Dihydroorotate dehydrogenase (quinone) from Thiobacillus denitrificans (strain ATCC 25259 / T1).